The chain runs to 976 residues: Protein PLASTID MOVEMENT IMPAIRED 1-RELATED 2 (976 aa).

Residues 81-229 enclose the C2 NT-type domain; that stretch reads IAHFGQRRFD…VLNLSFDYSV (149 aa). Basic and acidic residues predominate over residues 309 to 319; the sequence is KQAADSDDSGK. Disordered stretches follow at residues 309-343 and 381-419; these read KQAA…ESSR and NLLP…STEK. Positions 394–414 are enriched in low complexity; sequence STFSSQVISESSESKSPSAMD.

Its function is as follows. Seems not necessary for chloroplast and nuclear photorelocation movements. The polypeptide is Protein PLASTID MOVEMENT IMPAIRED 1-RELATED 2 (Arabidopsis thaliana (Mouse-ear cress)).